Consider the following 363-residue polypeptide: Aspartate carbamoyltransferase, chloroplastic (363 aa).

The tract at residues 1 to 21 (MAAARATLPLPRVPAPSPRPQ) is disordered. Residues 1 to 36 (MAAARATLPLPRVPAPSPRPQLRPFPSLPARRGAVA) constitute a chloroplast transit peptide. The span at 11–21 (PRVPAPSPRPQ) shows a compositional bias: pro residues. Residues arginine 109 and threonine 110 each coordinate carbamoyl phosphate. Positions 109 and 110 each coordinate UMP. Lysine 139 contacts L-aspartate. Carbamoyl phosphate contacts are provided by arginine 160, histidine 188, and glutamine 191. Arginine 160 and histidine 188 together coordinate UMP. UMP contacts are provided by arginine 221 and arginine 283. Positions 221 and 283 each coordinate L-aspartate. Positions 323 and 324 each coordinate carbamoyl phosphate.

This sequence belongs to the aspartate/ornithine carbamoyltransferase superfamily. ATCase family. In terms of assembly, homotrimer.

The protein resides in the plastid. It localises to the chloroplast. The catalysed reaction is carbamoyl phosphate + L-aspartate = N-carbamoyl-L-aspartate + phosphate + H(+). The protein operates within pyrimidine metabolism; UMP biosynthesis via de novo pathway; (S)-dihydroorotate from bicarbonate: step 2/3. With respect to regulation, feedback inhibited by UMP. Functionally, catalyzes the condensation of carbamoyl phosphate and aspartate to form carbamoyl aspartate and inorganic phosphate, the committed step in the de novo pyrimidine nucleotide biosynthesis pathway. The polypeptide is Aspartate carbamoyltransferase, chloroplastic (PYRB) (Oryza sativa subsp. japonica (Rice)).